Consider the following 579-residue polypeptide: Mitochondrial distribution and morphology protein 36 (579 aa).

The tract at residues 1–27 is disordered; it reads MDENGTVKPGYELKGLNSGNSRSNMDK. At serine 42 the chain carries Phosphoserine. 2 disordered regions span residues 378 to 401 and 446 to 518; these read TPIN…GRRL and DNKH…ESQS. Residues 379–390 show a composition bias toward polar residues; it reads PINSSDSDNLSN. Basic and acidic residues predominate over residues 446–463; the sequence is DNKHSTKDTDSNIRRNEH. A compositionally biased stretch (low complexity) spans 495 to 518; it reads PSQSSSRMSTLPLSPSSSLLESQS.

In terms of biological role, involved in mitochondrial distribution and morphology. The sequence is that of Mitochondrial distribution and morphology protein 36 (MDM36) from Saccharomyces cerevisiae (strain ATCC 204508 / S288c) (Baker's yeast).